Reading from the N-terminus, the 271-residue chain is Urease accessory protein UreD (271 aa).

It belongs to the UreD family. In terms of assembly, ureD, UreF and UreG form a complex that acts as a GTP-hydrolysis-dependent molecular chaperone, activating the urease apoprotein by helping to assemble the nickel containing metallocenter of UreC. The UreE protein probably delivers the nickel.

The protein resides in the cytoplasm. In terms of biological role, required for maturation of urease via the functional incorporation of the urease nickel metallocenter. The polypeptide is Urease accessory protein UreD (Haemophilus influenzae (strain 86-028NP)).